We begin with the raw amino-acid sequence, 549 residues long: MRLVLSSLIVIAGLLSSQATAATAPEQTASADIRDSGFVYCVSGQVNTFNPQKASSGLIVDTLAAQLYDRLLDVDPYTYRLVPELAESWEVLDNGATYRFHLRRDVSFQKTAWFTPTRKLNADDVVFTFQRIFDRRHPWHNINGSSFPYFDSLQFADNVKSVRKLDNNTVEFRLTQPDASFLWHLATHYASVMSAEYAAQLSRKDRQELLDRQPVGTGPFQLSEYRAGQFIRLQRHDGFWRGKPLMPQVVVDLGSGGTGRLSKLLTGECDVLAWPAASQLTILRDDPRLRLTLRPGMNIAYLAFNTDKPPLNNPAVRHALALSINNQRLMQSIYYGTAETAASILPRASWAYDNDAKITEYNPQKSREQLKALGIENLTLHLWVPTSSQAWNPSPLKTAELIQADMAQVGVKVVIVPVEGRFQEARLMDMNHDLTLSGWATDSNDPDSFFRPLLSCAAINSQTNFAHWCNPEFDSVLRKALSSQQLASRIEAYEEAQNILEKELPILPLASSLRLQAYRYDIKGLVLSPFGNASFAGVSREKHEEVKKP.

The N-terminal stretch at 1–21 is a signal peptide; it reads MRLVLSSLIVIAGLLSSQATA.

The protein belongs to the bacterial solute-binding protein 5 family.

It localises to the periplasm. Involved in a peptide intake transport system that plays a role in the resistance to antimicrobial peptides. The polypeptide is Peptide transport periplasmic protein SapA (Salmonella typhimurium (strain LT2 / SGSC1412 / ATCC 700720)).